A 206-amino-acid chain; its full sequence is Small ribosomal subunit protein uS3 (206 aa).

A KH type-2 domain is found at I39–K107.

The protein belongs to the universal ribosomal protein uS3 family. As to quaternary structure, part of the 30S ribosomal subunit. Forms a tight complex with proteins S10 and S14.

Functionally, binds the lower part of the 30S subunit head. Binds mRNA in the 70S ribosome, positioning it for translation. This Wolbachia pipientis subsp. Culex pipiens (strain wPip) protein is Small ribosomal subunit protein uS3.